Reading from the N-terminus, the 257-residue chain is Thiazole synthase (257 aa).

Lys96 functions as the Schiff-base intermediate with DXP in the catalytic mechanism. 1-deoxy-D-xylulose 5-phosphate-binding positions include Gly157, 184–185 (AG), and 206–207 (NT).

This sequence belongs to the ThiG family. Homotetramer. Forms heterodimers with either ThiH or ThiS.

It localises to the cytoplasm. The catalysed reaction is [ThiS sulfur-carrier protein]-C-terminal-Gly-aminoethanethioate + 2-iminoacetate + 1-deoxy-D-xylulose 5-phosphate = [ThiS sulfur-carrier protein]-C-terminal Gly-Gly + 2-[(2R,5Z)-2-carboxy-4-methylthiazol-5(2H)-ylidene]ethyl phosphate + 2 H2O + H(+). It participates in cofactor biosynthesis; thiamine diphosphate biosynthesis. Catalyzes the rearrangement of 1-deoxy-D-xylulose 5-phosphate (DXP) to produce the thiazole phosphate moiety of thiamine. Sulfur is provided by the thiocarboxylate moiety of the carrier protein ThiS. In vitro, sulfur can be provided by H(2)S. The polypeptide is Thiazole synthase (Rhizobium meliloti (strain 1021) (Ensifer meliloti)).